The primary structure comprises 119 residues: NADH-quinone oxidoreductase subunit A (119 aa).

Helical transmembrane passes span 7 to 27 (FPVL…MTIG), 63 to 83 (LIAI…PWGV), and 88 to 108 (IGWP…VGFV).

This sequence belongs to the complex I subunit 3 family. In terms of assembly, NDH-1 is composed of 14 different subunits. Subunits NuoA, H, J, K, L, M, N constitute the membrane sector of the complex.

The protein resides in the cell inner membrane. It carries out the reaction a quinone + NADH + 5 H(+)(in) = a quinol + NAD(+) + 4 H(+)(out). NDH-1 shuttles electrons from NADH, via FMN and iron-sulfur (Fe-S) centers, to quinones in the respiratory chain. The immediate electron acceptor for the enzyme in this species is believed to be ubiquinone. Couples the redox reaction to proton translocation (for every two electrons transferred, four hydrogen ions are translocated across the cytoplasmic membrane), and thus conserves the redox energy in a proton gradient. In Ralstonia pickettii (strain 12J), this protein is NADH-quinone oxidoreductase subunit A.